We begin with the raw amino-acid sequence, 846 residues long: Translation initiation factor IF-2 (846 aa).

The tract at residues K199–K219 is disordered. A compositionally biased stretch (basic residues) spans S207–K219. The tr-type G domain occupies S345–E512. The G1 stretch occupies residues G354 to T361. GTP is bound at residue G354–T361. The segment at G379–H383 is G2. Positions D400–G403 are G3. Residues D400 to H404 and N454 to D457 each bind GTP. Positions N454–D457 are G4. Residues S490–K492 are G5.

It belongs to the TRAFAC class translation factor GTPase superfamily. Classic translation factor GTPase family. IF-2 subfamily.

It localises to the cytoplasm. In terms of biological role, one of the essential components for the initiation of protein synthesis. Protects formylmethionyl-tRNA from spontaneous hydrolysis and promotes its binding to the 30S ribosomal subunits. Also involved in the hydrolysis of GTP during the formation of the 70S ribosomal complex. The chain is Translation initiation factor IF-2 from Francisella tularensis subsp. holarctica (strain LVS).